Here is a 316-residue protein sequence, read N- to C-terminus: Protoheme IX farnesyltransferase (316 aa).

A run of 9 helical transmembrane segments spans residues 32–52 (VMSL…GQIN), 53–73 (PVLG…SGAL), 93–113 (IPAG…LSCF), 116–136 (AILG…TIFF), 152–172 (NIVI…ACVT), 180–200 (TVLF…LALF), 226–246 (IVAY…LGFA), 248–268 (FAYG…SIAV), and 289–309 (IFYL…AMLV).

This sequence belongs to the UbiA prenyltransferase family. Protoheme IX farnesyltransferase subfamily.

The protein resides in the cell inner membrane. The catalysed reaction is heme b + (2E,6E)-farnesyl diphosphate + H2O = Fe(II)-heme o + diphosphate. It participates in porphyrin-containing compound metabolism; heme O biosynthesis; heme O from protoheme: step 1/1. Its function is as follows. Converts heme B (protoheme IX) to heme O by substitution of the vinyl group on carbon 2 of heme B porphyrin ring with a hydroxyethyl farnesyl side group. This chain is Protoheme IX farnesyltransferase, found in Rhizobium etli (strain CIAT 652).